A 175-amino-acid polypeptide reads, in one-letter code: Ribosome maturation factor RimM (175 aa).

Residues 96–175 enclose the PRC barrel domain; sequence EEDYYWHDLI…TITVDWDAGF (80 aa).

The protein belongs to the RimM family. As to quaternary structure, binds ribosomal protein uS19.

Its subcellular location is the cytoplasm. Its function is as follows. An accessory protein needed during the final step in the assembly of 30S ribosomal subunit, possibly for assembly of the head region. Essential for efficient processing of 16S rRNA. May be needed both before and after RbfA during the maturation of 16S rRNA. It has affinity for free ribosomal 30S subunits but not for 70S ribosomes. This Haemophilus ducreyi (strain 35000HP / ATCC 700724) protein is Ribosome maturation factor RimM.